Consider the following 128-residue polypeptide: Small ribosomal subunit protein eS8 (128 aa).

A disordered region spans residues 1-31; that stretch reads MAWYQGNDLRKPTGGKKTRHRKKRKHELGRP. A compositionally biased stretch (basic residues) spans 13-27; sequence TGGKKTRHRKKRKHE.

It belongs to the eukaryotic ribosomal protein eS8 family. In terms of assembly, part of the 30S ribosomal subunit.

In Staphylothermus marinus (strain ATCC 43588 / DSM 3639 / JCM 9404 / F1), this protein is Small ribosomal subunit protein eS8.